The following is a 329-amino-acid chain: Transmembrane protein I329L (329 aa).

Residues 1-31 form the signal peptide; that stretch reads MLRVFIFFVFLGSGLTGRIKPQVTCKYFISE. 6 N-linked (GlcNAc...) asparagine; by host glycosylation sites follow: asparagine 32, asparagine 39, asparagine 44, asparagine 76, asparagine 82, and asparagine 101. The Extracellular segment spans residues 32–239; sequence NNTWYKYNVT…NTERYKSCYP (208 aa). The LRR repeat unit spans residues 112-133; that stretch reads ELKFLDLRYNDLQVIDYNILRK. Asparagine 185 and asparagine 219 each carry an N-linked (GlcNAc...) asparagine; by host glycan. A disulfide bond links cysteine 195 and cysteine 237. A helical membrane pass occupies residues 240–260; sequence LVFISILCSCISFLFLFICLL. Residues 261–329 lie on the Cytoplasmic side of the membrane; the sequence is RSICKKYSCT…EKKVSCSRRK (69 aa).

It belongs to the asfivirus I329L family. Highly glycosylated.

It is found in the host endoplasmic reticulum membrane. The protein localises to the host Golgi apparatus membrane. In terms of biological role, viral TLR3 homolog that probably prevents TLR3 dimerization and subsequent induction of IFN. Inhibits dsRNA-stimulated activation of NF-kB and IRF3. This Ornithodoros (relapsing fever ticks) protein is Transmembrane protein I329L.